Consider the following 426-residue polypeptide: Putative glutamate--cysteine ligase 2 (426 aa).

The protein belongs to the glutamate--cysteine ligase type 2 family. YbdK subfamily.

The catalysed reaction is L-cysteine + L-glutamate + ATP = gamma-L-glutamyl-L-cysteine + ADP + phosphate + H(+). Its function is as follows. ATP-dependent carboxylate-amine ligase which exhibits weak glutamate--cysteine ligase activity. This chain is Putative glutamate--cysteine ligase 2, found in Bradyrhizobium diazoefficiens (strain JCM 10833 / BCRC 13528 / IAM 13628 / NBRC 14792 / USDA 110).